The primary structure comprises 257 residues: Trans-aconitate 2-methyltransferase (257 aa).

Belongs to the methyltransferase superfamily. Tam family.

It localises to the cytoplasm. The catalysed reaction is trans-aconitate + S-adenosyl-L-methionine = (E)-3-(methoxycarbonyl)pent-2-enedioate + S-adenosyl-L-homocysteine. Its function is as follows. Catalyzes the S-adenosylmethionine monomethyl esterification of trans-aconitate. The polypeptide is Trans-aconitate 2-methyltransferase (Sinorhizobium medicae (strain WSM419) (Ensifer medicae)).